A 735-amino-acid polypeptide reads, in one-letter code: Putative RNA polymerase II subunit B1 CTD phosphatase RPAP2 homolog (735 aa).

The RTR1-type zinc finger occupies 33–118 (AARKLMSRSD…LQEARTLEFD (86 aa)). Residues Cys-56, Cys-61, Cys-94, and Cys-98 each coordinate Zn(2+). Disordered regions lie at residues 179–201 (VPFDRSKSSNDSKATTQSNQEKH), 349–374 (GKNTLSGSSSGSNTKGSKTKPEKSRK), and 519–538 (EHSEEEMTEEEPTLLKWPNK). Residues 349–364 (GKNTLSGSSSGSNTKG) show a composition bias toward low complexity. The span at 519 to 530 (EHSEEEMTEEEP) shows a compositional bias: acidic residues.

It belongs to the RPAP2 family.

It localises to the nucleus. It catalyses the reaction O-phospho-L-seryl-[protein] + H2O = L-seryl-[protein] + phosphate. The enzyme catalyses O-phospho-L-threonyl-[protein] + H2O = L-threonyl-[protein] + phosphate. Putative RNA polymerase II subunit B1 C-terminal domain (CTD) phosphatase involved in RNA polymerase II transcription regulation. This chain is Putative RNA polymerase II subunit B1 CTD phosphatase RPAP2 homolog, found in Arabidopsis thaliana (Mouse-ear cress).